The sequence spans 128 residues: Protein C10 (128 aa).

This sequence belongs to the UPF0456 family.

Its subcellular location is the cytoplasm. This Xenopus laevis (African clawed frog) protein is Protein C10.